The sequence spans 27 residues: Defensin-like protein 1 (27 aa).

A Pyrrolidone carboxylic acid modification is found at Gln1.

The protein belongs to the DEFL family. As to quaternary structure, forms oligomers in its native state.

Functionally, possesses antifungal activity sensitive to inorganic cations. The polypeptide is Defensin-like protein 1 (Brassica campestris (Field mustard)).